The sequence spans 40 residues: Acyl-CoA-binding protein 2 (40 aa).

Residues 1-15 (ALKEEFEEHAEKAKT) are compositionally biased toward basic and acidic residues. The tract at residues 1–25 (ALKEEFEEHAEKAKTLPENTSSENK) is disordered. Residues 2–40 (LKEEFEEHAEKAKTLPENTSSENKLTLYGLYKQATVGNV) form the ACB domain.

It belongs to the ACBP family.

Its subcellular location is the cytoplasm. In terms of biological role, binds medium- and long-chain acyl-CoA esters with very high affinity and may function as an intracellular carrier of acyl-CoA esters. The chain is Acyl-CoA-binding protein 2 from Digitalis lanata (Grecian foxglove).